The following is a 397-amino-acid chain: CCA-adding enzyme (397 aa).

ATP-binding residues include G26 and R29. Positions 26 and 29 each coordinate CTP. Mg(2+) contacts are provided by D39 and D41. The ATP site is built by R110, D153, R156, R159, and R162. CTP-binding residues include R110, D153, R156, R159, and R162.

The protein belongs to the tRNA nucleotidyltransferase/poly(A) polymerase family. Bacterial CCA-adding enzyme type 3 subfamily. In terms of assembly, homodimer. The cofactor is Mg(2+).

It catalyses the reaction a tRNA precursor + 2 CTP + ATP = a tRNA with a 3' CCA end + 3 diphosphate. The catalysed reaction is a tRNA with a 3' CCA end + 2 CTP + ATP = a tRNA with a 3' CCACCA end + 3 diphosphate. Functionally, catalyzes the addition and repair of the essential 3'-terminal CCA sequence in tRNAs without using a nucleic acid template. Adds these three nucleotides in the order of C, C, and A to the tRNA nucleotide-73, using CTP and ATP as substrates and producing inorganic pyrophosphate. tRNA 3'-terminal CCA addition is required both for tRNA processing and repair. Also involved in tRNA surveillance by mediating tandem CCA addition to generate a CCACCA at the 3' terminus of unstable tRNAs. While stable tRNAs receive only 3'-terminal CCA, unstable tRNAs are marked with CCACCA and rapidly degraded. This is CCA-adding enzyme from Bacillus cereus (strain AH187).